The primary structure comprises 325 residues: Elongation factor P--(R)-beta-lysine ligase (325 aa).

Ser-76 to Glu-78 contacts substrate. ATP is bound by residues Arg-100–Glu-102 and Asn-109. Position 118 (Tyr-118) interacts with substrate. Glu-244 to Leu-245 lines the ATP pocket. Glu-251 serves as a coordination point for substrate. Gly-300 is a binding site for ATP.

Belongs to the class-II aminoacyl-tRNA synthetase family. EpmA subfamily. In terms of assembly, homodimer.

The enzyme catalyses D-beta-lysine + L-lysyl-[protein] + ATP = N(6)-((3R)-3,6-diaminohexanoyl)-L-lysyl-[protein] + AMP + diphosphate + H(+). In terms of biological role, with EpmB is involved in the beta-lysylation step of the post-translational modification of translation elongation factor P (EF-P). Catalyzes the ATP-dependent activation of (R)-beta-lysine produced by EpmB, forming a lysyl-adenylate, from which the beta-lysyl moiety is then transferred to the epsilon-amino group of a conserved specific lysine residue in EF-P. This is Elongation factor P--(R)-beta-lysine ligase from Citrobacter koseri (strain ATCC BAA-895 / CDC 4225-83 / SGSC4696).